A 533-amino-acid polypeptide reads, in one-letter code: Flavin-containing monooxygenase 5 (533 aa).

Arginine 5 is modified (dimethylated arginine). Residues glycine 10–serine 14, glutamate 33, and leucine 41–tryptophan 42 contribute to the FAD site. At serine 54 the chain carries Phosphoserine. Tyrosine 56 bears the Phosphotyrosine mark. Serine 58 bears the Phosphoserine mark. Residue asparagine 62 to threonine 63 coordinates FAD. Position 196–199 (serine 196–aspartate 199) interacts with NADP(+). The residue at position 284 (threonine 284) is a Phosphothreonine. Serine 401 bears the Phosphoserine mark. The helical transmembrane segment at leucine 513 to phenylalanine 533 threads the bilayer.

Belongs to the FMO family. FAD serves as cofactor.

It localises to the microsome membrane. The protein resides in the endoplasmic reticulum membrane. It carries out the reaction N,N-dimethylaniline + NADPH + O2 + H(+) = N,N-dimethylaniline N-oxide + NADP(+) + H2O. It catalyses the reaction NADPH + O2 + H(+) = H2O2 + NADP(+). The catalysed reaction is heptan-2-one + NADPH + O2 + H(+) = pentyl acetate + NADP(+) + H2O. The enzyme catalyses octan-3-one + NADPH + O2 + H(+) = pentyl propanoate + NADP(+) + H2O. It carries out the reaction octan-3-one + NADPH + O2 + H(+) = ethyl hexanoate + NADP(+) + H2O. It catalyses the reaction hexan-3-one + NADPH + O2 + H(+) = ethyl butanoate + NADP(+) + H2O. The catalysed reaction is hexan-3-one + NADPH + O2 + H(+) = propyl propanoate + NADP(+) + H2O. The enzyme catalyses heptan-4-one + NADPH + O2 + H(+) = propyl butanoate + NADP(+) + H2O. It carries out the reaction (2E)-geranial + NADPH + O2 + H(+) = (1E)-2,6-dimethylhepta-1,5-dien-1-yl formate + NADP(+) + H2O. It catalyses the reaction sulcatone + NADPH + O2 + H(+) = 4-methylpent-3-en-1-yl acetate + NADP(+) + H2O. Its function is as follows. Acts as a Baeyer-Villiger monooxygenase on a broad range of substrates. Catalyzes the insertion of an oxygen atom into a carbon-carbon bond adjacent to a carbonyl, which converts ketones to esters. Active on diverse carbonyl compounds, whereas soft nucleophiles are mostly non- or poorly reactive. In contrast with other forms of FMO it is non- or poorly active on 'classical' substrates such as drugs, pesticides, and dietary components containing soft nucleophilic heteroatoms. Able to oxidize drug molecules bearing a carbonyl group on an aliphatic chain, such as nabumetone and pentoxifylline. Also, in the absence of substrates, shows slow but yet significant NADPH oxidase activity. Acts as a positive modulator of cholesterol biosynthesis as well as glucose homeostasis, promoting metabolic aging via pleiotropic effects. The chain is Flavin-containing monooxygenase 5 from Rattus norvegicus (Rat).